The chain runs to 625 residues: 1-deoxy-D-xylulose-5-phosphate synthase (625 aa).

Thiamine diphosphate is bound by residues His84 and 125–127 (GHS). Asp156 provides a ligand contact to Mg(2+). Thiamine diphosphate-binding positions include 157-158 (GA), Asn185, Phe292, and Glu373. Asn185 lines the Mg(2+) pocket.

This sequence belongs to the transketolase family. DXPS subfamily. As to quaternary structure, homodimer. Mg(2+) is required as a cofactor. The cofactor is thiamine diphosphate.

The enzyme catalyses D-glyceraldehyde 3-phosphate + pyruvate + H(+) = 1-deoxy-D-xylulose 5-phosphate + CO2. The protein operates within metabolic intermediate biosynthesis; 1-deoxy-D-xylulose 5-phosphate biosynthesis; 1-deoxy-D-xylulose 5-phosphate from D-glyceraldehyde 3-phosphate and pyruvate: step 1/1. Functionally, catalyzes the acyloin condensation reaction between C atoms 2 and 3 of pyruvate and glyceraldehyde 3-phosphate to yield 1-deoxy-D-xylulose-5-phosphate (DXP). This chain is 1-deoxy-D-xylulose-5-phosphate synthase, found in Marinomonas sp. (strain MWYL1).